The sequence spans 1530 residues: Glutamate-rich protein 3 (1530 aa).

Disordered stretches follow at residues 165–187 (RLQP…RSRS), 408–429 (SLPK…KAEG), 475–661 (MTSK…PMPI), 673–724 (TEKG…GLEE), 773–870 (EAME…AVGL), 923–1146 (REAA…LLGE), 1167–1334 (LENI…GMGG), 1360–1383 (LAGS…DVAE), and 1425–1530 (YTTE…NVQV). Basic and acidic residues-rich tracts occupy residues 415 to 429 (EKST…KAEG), 531 to 545 (LDDK…KESE), and 552 to 562 (PDARDNVKDEN). Positions 563 to 574 (DGCSESELEEDK) are enriched in acidic residues. The segment covering 581-592 (SSTSSRSHPYSS) has biased composition (low complexity). A compositionally biased stretch (basic and acidic residues) spans 600 to 616 (VGDREAHTDSSTDESAR). Acidic residues predominate over residues 638–647 (ESLEIEIEDQ). 2 stretches are compositionally biased toward basic and acidic residues: residues 684 to 717 (LSEK…DKKA) and 773 to 787 (EAME…RDAD). Positions 834–845 (GIERGAEGAAEA) are enriched in low complexity. Residues 943–958 (GESEEEASIDLEDTGP) are compositionally biased toward acidic residues. Basic and acidic residues-rich tracts occupy residues 979–992 (EPAK…RTET), 1039–1116 (EANR…EETK), and 1173–1212 (LRKE…RQDG). Residues 1213–1225 (EGALAAPEAEPAG) show a composition bias toward low complexity. Residues 1289–1300 (AVDEDPEEEEDK) show a composition bias toward acidic residues. Basic and acidic residues-rich tracts occupy residues 1464–1487 (GRQE…RELS) and 1502–1511 (DFTETREKQQ). Polar residues predominate over residues 1517-1530 (ESETADVSPNNVQV).

In terms of assembly, interacts with CLTC/clathrin heavy chain 1, AP2A2/AP-2 complex subunit alpha-2, and PIK3C2A/phosphatidylinositol 4-phosphate 3-kinase C2 domain-containing subunit alpha. Expressed in dopaminergic and serotoninergic neurons.

The protein resides in the cell projection. The protein localises to the cilium. It is found in the cytoplasm. In terms of biological role, component of the primary cilium that controls cilium formation and length. May function within retrograde intraflagellar transport (IFT)-associated pathways to remove signaling proteins from primary cilia. Also involved in neuronal vesicle biogenesis and neurotransmitter vesicular function. This Homo sapiens (Human) protein is Glutamate-rich protein 3.